The sequence spans 471 residues: N-succinylglutamate 5-semialdehyde dehydrogenase (471 aa).

An NAD(+)-binding site is contributed by 207-212 (GSAHAG). Residues glutamate 230 and cysteine 264 contribute to the active site.

Belongs to the aldehyde dehydrogenase family. AstD subfamily.

The enzyme catalyses N-succinyl-L-glutamate 5-semialdehyde + NAD(+) + H2O = N-succinyl-L-glutamate + NADH + 2 H(+). Its pathway is amino-acid degradation; L-arginine degradation via AST pathway; L-glutamate and succinate from L-arginine: step 4/5. Functionally, catalyzes the NAD-dependent reduction of succinylglutamate semialdehyde into succinylglutamate. The polypeptide is N-succinylglutamate 5-semialdehyde dehydrogenase (Novosphingobium aromaticivorans (strain ATCC 700278 / DSM 12444 / CCUG 56034 / CIP 105152 / NBRC 16084 / F199)).